Consider the following 234-residue polypeptide: Probable chemoreceptor glutamine deamidase CheD (234 aa).

It belongs to the CheD family.

The enzyme catalyses L-glutaminyl-[protein] + H2O = L-glutamyl-[protein] + NH4(+). Probably deamidates glutamine residues to glutamate on methyl-accepting chemotaxis receptors (MCPs), playing an important role in chemotaxis. This is Probable chemoreceptor glutamine deamidase CheD from Burkholderia pseudomallei (strain 1710b).